A 325-amino-acid chain; its full sequence is UDP-N-acetylglucosamine transporter (325 aa).

The next 8 membrane-spanning stretches (helical) occupy residues 8 to 24 (VSLG…VLTM), 42 to 58 (AVVV…ILLV), 138 to 154 (VYQW…VAFV), 173 to 189 (FVGL…SGFA), 209 to 225 (IQLG…GVYI), 246 to 262 (IVVV…AAVI), 268 to 284 (ILKG…STLI), and 295 to 311 (TSVF…ATFL).

It belongs to the nucleotide-sugar transporter family. SLC35A subfamily. As to quaternary structure, interacts with SLC35A2; the interaction is reduced in the presence of SLC35A4. Found in a complex with SLC35A2 and SLC35A4. Interacts with MGAT4B. Post-translationally, O-Glcnacylation regulates the stability of SLC35A3 and the specific complex formation with MGAT4B.

The protein localises to the golgi apparatus membrane. The enzyme catalyses UMP(out) + UDP-N-acetyl-alpha-D-glucosamine(in) = UMP(in) + UDP-N-acetyl-alpha-D-glucosamine(out). In terms of biological role, transports diphosphate-N-acetylglucosamine (UDP-GlcNAc) from the cytosol into the lumen of the Golgi apparatus, functioning as an antiporter that exchanges UDP-N-acetyl-alpha-D-glucosamine for UMP. May supply UDP-GlcNAc as substrate for Golgi-resident glycosyltransferases that generate highly branched, multiantennary complex N-glycans and keratan sulfate. However, the exact role of SLC35A3 still needs to be elucidated, it could be a member of a catalytically more efficient multiprotein complex rather than function independently as a single transporter. In Homo sapiens (Human), this protein is UDP-N-acetylglucosamine transporter (SLC35A3).